The primary structure comprises 211 residues: Large ribosomal subunit protein bL25 (211 aa).

Residues 185–211 (ESTTPAATEGEETEAAAAAPEPAAEDK) are disordered. Low complexity predominate over residues 199–211 (AAAAAPEPAAEDK).

The protein belongs to the bacterial ribosomal protein bL25 family. CTC subfamily. In terms of assembly, part of the 50S ribosomal subunit; part of the 5S rRNA/L5/L18/L25 subcomplex. Contacts the 5S rRNA. Binds to the 5S rRNA independently of L5 and L18.

In terms of biological role, this is one of the proteins that binds to the 5S RNA in the ribosome where it forms part of the central protuberance. The chain is Large ribosomal subunit protein bL25 from Treponema denticola (strain ATCC 35405 / DSM 14222 / CIP 103919 / JCM 8153 / KCTC 15104).